A 311-amino-acid chain; its full sequence is Probable manganese-dependent inorganic pyrophosphatase (311 aa).

The Mn(2+) site is built by H9, D13, D15, D75, H97, and D149.

It belongs to the PPase class C family. Mn(2+) is required as a cofactor.

It localises to the cytoplasm. It carries out the reaction diphosphate + H2O = 2 phosphate + H(+). The sequence is that of Probable manganese-dependent inorganic pyrophosphatase from Lactobacillus johnsonii (strain CNCM I-12250 / La1 / NCC 533).